Consider the following 261-residue polypeptide: Triosephosphate isomerase (261 aa).

Residue 10-12 (NWK) coordinates substrate. The active-site Electrophile is the histidine 100. Glutamate 172 serves as the catalytic Proton acceptor. Substrate-binding positions include glycine 178, serine 218, and 239–240 (GG).

The protein belongs to the triosephosphate isomerase family. In terms of assembly, homodimer.

The protein localises to the cytoplasm. It catalyses the reaction D-glyceraldehyde 3-phosphate = dihydroxyacetone phosphate. Its pathway is carbohydrate biosynthesis; gluconeogenesis. It participates in carbohydrate degradation; glycolysis; D-glyceraldehyde 3-phosphate from glycerone phosphate: step 1/1. Its function is as follows. Involved in the gluconeogenesis. Catalyzes stereospecifically the conversion of dihydroxyacetone phosphate (DHAP) to D-glyceraldehyde-3-phosphate (G3P). This chain is Triosephosphate isomerase, found in Mycobacterium marinum (strain ATCC BAA-535 / M).